The chain runs to 270 residues: Secreted RxLR effector protein 149 (270 aa).

The signal sequence occupies residues 1–21 (MRNGVVLFGLFFIGYSSCVLA). Residues 43-58 (RTLQADDPERILAEER) carry the RxLR-dEER motif.

It belongs to the RxLR effector family.

Its subcellular location is the secreted. The protein localises to the host nucleus. It localises to the host cytoplasm. Secreted effector that completely suppresses the host cell death induced by cell death-inducing proteins. This Plasmopara viticola (Downy mildew of grapevine) protein is Secreted RxLR effector protein 149.